The sequence spans 38 residues: DNA binding protein ORF8 (38 aa).

It belongs to the microviridae J protein family.

It is found in the virion. It localises to the host cytoplasm. Functionally, mediates ssDNA packaging into virion, it locates to the internal surface of the capsid, thereby displacing the internal scaffolding protein during virion formation. Additionally, protein ORF8 plays a role in viral attachment to the host cell. The polypeptide is DNA binding protein ORF8 (Spiroplasma melliferum (SpV4)).